A 289-amino-acid polypeptide reads, in one-letter code: uncharacterized protein (289 aa).

Residues 1-58 (MDEKDWILLKILHEEQSVTKTAERLFTSQPSITYRLKKIEEIFGIELFTKRHKGITFT) form the HTH lysR-type domain. Residues 18–37 (VTKTAERLFTSQPSITYRLK) constitute a DNA-binding region (H-T-H motif).

The protein belongs to the LysR transcriptional regulatory family.

This is an uncharacterized protein from Bacillus subtilis (strain 168).